A 182-amino-acid polypeptide reads, in one-letter code: Probable inosine/xanthosine triphosphatase (182 aa).

A Mg(2+)-binding site is contributed by Glu65. 65-66 (EA) is a binding site for substrate.

Belongs to the YjjX NTPase family. In terms of assembly, homodimer. The cofactor is Mg(2+). It depends on Mn(2+) as a cofactor.

The catalysed reaction is XTP + H2O = XDP + phosphate + H(+). It catalyses the reaction ITP + H2O = IDP + phosphate + H(+). Phosphatase that hydrolyzes non-canonical purine nucleotides such as XTP and ITP to their respective diphosphate derivatives. Probably excludes non-canonical purines from DNA/RNA precursor pool, thus preventing their incorporation into DNA/RNA and avoiding chromosomal lesions. This is Probable inosine/xanthosine triphosphatase from Pyrobaculum neutrophilum (strain DSM 2338 / JCM 9278 / NBRC 100436 / V24Sta) (Thermoproteus neutrophilus).